A 204-amino-acid polypeptide reads, in one-letter code: Pre-mRNA leakage protein 1 (204 aa).

Positions 104 to 172 (YLVGRELGHS…NGTCLNNVVI (69 aa)) constitute an FHA domain.

In terms of assembly, belongs to the pre-mRNA retention and splicing (RES) complex composed of at least BUD13, IST3 and PML1.

Its subcellular location is the cytoplasm. It is found in the nucleus. Required for efficient splicing and pre-mRNA nuclear retention. In Saccharomyces cerevisiae (strain ATCC 204508 / S288c) (Baker's yeast), this protein is Pre-mRNA leakage protein 1 (PML1).